Reading from the N-terminus, the 506-residue chain is Maturase K (506 aa).

The protein belongs to the intron maturase 2 family. MatK subfamily.

It localises to the plastid. The protein localises to the chloroplast. In terms of biological role, usually encoded in the trnK tRNA gene intron. Probably assists in splicing its own and other chloroplast group II introns. The sequence is that of Maturase K from Trifolium repens (Creeping white clover).